The sequence spans 288 residues: Phosphatidylserine decarboxylase proenzyme (288 aa).

Residues Asp-90, His-147, and Ser-252 each act as charge relay system; for autoendoproteolytic cleavage activity in the active site. Ser-252 (schiff-base intermediate with substrate; via pyruvic acid; for decarboxylase activity) is an active-site residue. Position 252 is a pyruvic acid (Ser); by autocatalysis (Ser-252).

The protein belongs to the phosphatidylserine decarboxylase family. PSD-B subfamily. Prokaryotic type I sub-subfamily. In terms of assembly, heterodimer of a large membrane-associated beta subunit and a small pyruvoyl-containing alpha subunit. Requires pyruvate as cofactor. Post-translationally, is synthesized initially as an inactive proenzyme. Formation of the active enzyme involves a self-maturation process in which the active site pyruvoyl group is generated from an internal serine residue via an autocatalytic post-translational modification. Two non-identical subunits are generated from the proenzyme in this reaction, and the pyruvate is formed at the N-terminus of the alpha chain, which is derived from the carboxyl end of the proenzyme. The autoendoproteolytic cleavage occurs by a canonical serine protease mechanism, in which the side chain hydroxyl group of the serine supplies its oxygen atom to form the C-terminus of the beta chain, while the remainder of the serine residue undergoes an oxidative deamination to produce ammonia and the pyruvoyl prosthetic group on the alpha chain. During this reaction, the Ser that is part of the protease active site of the proenzyme becomes the pyruvoyl prosthetic group, which constitutes an essential element of the active site of the mature decarboxylase.

The protein resides in the cell membrane. It catalyses the reaction a 1,2-diacyl-sn-glycero-3-phospho-L-serine + H(+) = a 1,2-diacyl-sn-glycero-3-phosphoethanolamine + CO2. The protein operates within phospholipid metabolism; phosphatidylethanolamine biosynthesis; phosphatidylethanolamine from CDP-diacylglycerol: step 2/2. Functionally, catalyzes the formation of phosphatidylethanolamine (PtdEtn) from phosphatidylserine (PtdSer). This is Phosphatidylserine decarboxylase proenzyme from Pseudomonas fluorescens (strain ATCC BAA-477 / NRRL B-23932 / Pf-5).